A 767-amino-acid polypeptide reads, in one-letter code: Polyribonucleotide nucleotidyltransferase (767 aa).

Positions 509 and 515 each coordinate Mg(2+). Residues 575-634 (PRILTVKVPIDKIGEVIGPKGKMINSIQDETGAEITIEDDGTIYIGATDGPSAEAARDAI) enclose the KH domain. One can recognise an S1 motif domain in the interval 646-718 (GERYLGTVVK…ERGKLSLVPV (73 aa)). Residues 725 to 767 (AVAAPNGGESPNGAKKTDASGNGAKQPRRRRRTRSSSRSSENT) form a disordered region. Residues 750-759 (QPRRRRRTRS) are compositionally biased toward basic residues.

The protein belongs to the polyribonucleotide nucleotidyltransferase family. It depends on Mg(2+) as a cofactor.

It localises to the cytoplasm. It catalyses the reaction RNA(n+1) + phosphate = RNA(n) + a ribonucleoside 5'-diphosphate. Functionally, involved in mRNA degradation. Catalyzes the phosphorolysis of single-stranded polyribonucleotides processively in the 3'- to 5'-direction. This is Polyribonucleotide nucleotidyltransferase from Thermobifida fusca (strain YX).